The chain runs to 571 residues: E3 ubiquitin-protein ligase RNF168 (571 aa).

The segment at 16-55 adopts an RING-type zinc-finger fold; it reads CGICMEILVEPVTLPCNHTLCKPCFQSTVEKASLCCPFCR. Ser-70 carries the post-translational modification Phosphoserine. Residues 110–128 carry the LR motif 1 motif; sequence LSKPGELRREYEEEISKVA. Ser-134 is subject to Phosphoserine. A UMI motif motif is present at residues 143-151; the sequence is EEYIQRLLA. Disordered stretches follow at residues 151-174 and 191-292; these read AEEEEEEKRQAEKRRRAMEEQLKS and EGSI…GADS. Positions 168 to 191 match the MIU motif 1 motif; the sequence is MEEQLKSDEELARKLSIDINNFCE. Ser-197 carries the post-translational modification Phosphoserine. Residues 202–214 are compositionally biased toward basic and acidic residues; sequence RKSDPVTPKSEKK. Residue Lys-210 forms a Glycyl lysine isopeptide (Lys-Gly) (interchain with G-Cter in SUMO2) linkage. The segment covering 231 to 242 has biased composition (polar residues); sequence PKSQFGSASHSE. The span at 243–263 shows a compositional bias: basic and acidic residues; it reads AVQEVRKDSVSKDIDSSDRKS. Residue Thr-362 is modified to Phosphothreonine. 2 disordered regions span residues 390–422 and 459–560; these read NQESSFEAVKDPCFSAKRRKVSPESSPDQEETE and KEQM…ISQK. 3 positions are modified to phosphoserine: Ser-411, Ser-414, and Ser-415. The short motif at 439 to 462 is the MIU motif 2 element; sequence RHKQEEQDRLLALQLQKEVDKEQM. Positions 466-477 match the LR motif 2 motif; it reads RQKGSPDEYHLR. Ser-470 is subject to Phosphoserine. Residues 508–519 are compositionally biased toward basic and acidic residues; sequence PTPERGSRDKNR. 2 stretches are compositionally biased toward polar residues: residues 520–530 and 549–560; these read QVSLKMQLKQS and SAHSLQPSISQK. Lys-528 participates in a covalent cross-link: Glycyl lysine isopeptide (Lys-Gly) (interchain with G-Cter in SUMO2).

It belongs to the RNF168 family. As to quaternary structure, monomer. Interacts with UBE2N/UBC13. Post-translationally, sumoylated with SUMO1 by PIAS4 in response to double-strand breaks (DSBs). Ubiquitinated.

The protein localises to the nucleus. It carries out the reaction S-ubiquitinyl-[E2 ubiquitin-conjugating enzyme]-L-cysteine + [acceptor protein]-L-lysine = [E2 ubiquitin-conjugating enzyme]-L-cysteine + N(6)-ubiquitinyl-[acceptor protein]-L-lysine.. The protein operates within protein modification; protein ubiquitination. In terms of biological role, E3 ubiquitin-protein ligase required for accumulation of repair proteins to sites of DNA damage. Acts with UBE2N/UBC13 to amplify the RNF8-dependent histone ubiquitination. Recruited to sites of DNA damage at double-strand breaks (DSBs) by binding to ubiquitinated histone H2A and H2AX and amplifies the RNF8-dependent H2A ubiquitination, promoting the formation of 'Lys-63'-linked ubiquitin conjugates. This leads to concentrate ubiquitinated histones H2A and H2AX at DNA lesions to the threshold required for recruitment of TP53BP1 and BRCA1. Also recruited at DNA interstrand cross-links (ICLs) sites and promotes accumulation of 'Lys-63'-linked ubiquitination of histones H2A and H2AX, leading to recruitment of FAAP20/C1orf86 and Fanconi anemia (FA) complex, followed by interstrand cross-link repair. H2A ubiquitination also mediates the ATM-dependent transcriptional silencing at regions flanking DSBs in cis, a mechanism to avoid collision between transcription and repair intermediates. Also involved in class switch recombination in immune system, via its role in regulation of DSBs repair. Following DNA damage, promotes the ubiquitination and degradation of JMJD2A/KDM4A in collaboration with RNF8, leading to unmask H4K20me2 mark and promote the recruitment of TP53BP1 at DNA damage sites. Not able to initiate 'Lys-63'-linked ubiquitination in vitro; possibly due to partial occlusion of the UBE2N/UBC13-binding region. Catalyzes monoubiquitination of 'Lys-13' and 'Lys-15' of nucleosomal histone H2A (H2AK13Ub and H2AK15Ub, respectively). The protein is E3 ubiquitin-protein ligase RNF168 of Homo sapiens (Human).